Consider the following 471-residue polypeptide: Bifunctional protein GlmU (471 aa).

The tract at residues 1–235 (MVAVAILAAG…YQEIFGINNR (235 aa)) is pyrophosphorylase. UDP-N-acetyl-alpha-D-glucosamine contacts are provided by residues 7-10 (LAAG), lysine 21, glutamine 82, and 87-88 (GT). Aspartate 112 is a binding site for Mg(2+). UDP-N-acetyl-alpha-D-glucosamine is bound by residues glycine 149, glutamate 164, asparagine 179, and asparagine 233. Asparagine 233 is a Mg(2+) binding site. The linker stretch occupies residues 236–256 (KHLAKAHEILQVRVKDDWMEA). An N-acetyltransferase region spans residues 257–471 (GVTLIDPDSI…SKKEENKSSP (215 aa)). Arginine 338 and lysine 356 together coordinate UDP-N-acetyl-alpha-D-glucosamine. The Proton acceptor role is filled by histidine 368. Residues tyrosine 371 and asparagine 382 each coordinate UDP-N-acetyl-alpha-D-glucosamine. Acetyl-CoA-binding positions include alanine 385, 391-392 (NY), serine 410, alanine 428, and arginine 445.

The protein in the N-terminal section; belongs to the N-acetylglucosamine-1-phosphate uridyltransferase family. This sequence in the C-terminal section; belongs to the transferase hexapeptide repeat family. In terms of assembly, homotrimer. The cofactor is Mg(2+).

The protein resides in the cytoplasm. The enzyme catalyses alpha-D-glucosamine 1-phosphate + acetyl-CoA = N-acetyl-alpha-D-glucosamine 1-phosphate + CoA + H(+). It catalyses the reaction N-acetyl-alpha-D-glucosamine 1-phosphate + UTP + H(+) = UDP-N-acetyl-alpha-D-glucosamine + diphosphate. The protein operates within nucleotide-sugar biosynthesis; UDP-N-acetyl-alpha-D-glucosamine biosynthesis; N-acetyl-alpha-D-glucosamine 1-phosphate from alpha-D-glucosamine 6-phosphate (route II): step 2/2. It participates in nucleotide-sugar biosynthesis; UDP-N-acetyl-alpha-D-glucosamine biosynthesis; UDP-N-acetyl-alpha-D-glucosamine from N-acetyl-alpha-D-glucosamine 1-phosphate: step 1/1. It functions in the pathway bacterial outer membrane biogenesis; LPS lipid A biosynthesis. Functionally, catalyzes the last two sequential reactions in the de novo biosynthetic pathway for UDP-N-acetylglucosamine (UDP-GlcNAc). The C-terminal domain catalyzes the transfer of acetyl group from acetyl coenzyme A to glucosamine-1-phosphate (GlcN-1-P) to produce N-acetylglucosamine-1-phosphate (GlcNAc-1-P), which is converted into UDP-GlcNAc by the transfer of uridine 5-monophosphate (from uridine 5-triphosphate), a reaction catalyzed by the N-terminal domain. This chain is Bifunctional protein GlmU, found in Trichodesmium erythraeum (strain IMS101).